Reading from the N-terminus, the 154-residue chain is Large ribosomal subunit protein eL24 (154 aa).

The segment at 92 to 154 (AKRNQKPEVR…AAAPRVGGKR (63 aa)) is disordered. Positions 96–122 (QKPEVRKAQREQAVKAAKEKKKADQVG) are enriched in basic and acidic residues. A compositionally biased stretch (low complexity) spans 129 to 154 (KARATAPKTKAPKTVKAAAPRVGGKR).

The protein belongs to the eukaryotic ribosomal protein eL24 family.

The chain is Large ribosomal subunit protein eL24 (RPL24) from Branchiostoma belcheri (Amphioxus).